We begin with the raw amino-acid sequence, 81 residues long: Adipogenin (81 aa).

Residues 16 to 36 (FLASWLCLPVGLLLFLLIVWL) form a helical membrane-spanning segment.

Belongs to the adipogenin family.

The protein resides in the membrane. It localises to the nucleus. Functionally, plays a role in stimulating adipocyte differentiation and development. The protein is Adipogenin of Sus scrofa (Pig).